The sequence spans 335 residues: 2,4-dienoyl-CoA reductase [(3E)-enoyl-CoA-producing], mitochondrial (335 aa).

Residues 1 to 34 (MALLGRAFFAGVSRLPCDPGPQRFFSFGTKTLYQ) constitute a mitochondrion transit peptide. N6-acetyllysine; alternate is present on residues K42 and K49. An N6-succinyllysine; alternate mark is found at K42 and K49. 66 to 71 (GGGTGL) is an NADP(+) binding site. T69 bears the Phosphothreonine mark. K73 is subject to N6-succinyllysine. R91 provides a ligand contact to NADP(+). R91 contributes to the substrate binding site. N6-acetyllysine; alternate is present on residues K97 and K106. An N6-succinyllysine; alternate mark is found at K97 and K106. D117 contacts NADP(+). Substrate-binding residues include R119 and F149. The active-site Proton acceptor is the Y199. NADP(+) is bound by residues K214 and 240-243 (PGPI). K244 bears the N6-acetyllysine; alternate mark. K244 is subject to N6-succinyllysine; alternate. Substrate is bound at residue R251. N6-acetyllysine; alternate is present on K260. K260 carries the N6-succinyllysine; alternate modification. Residue K315 is modified to N6-acetyllysine. K319 is subject to N6-acetyllysine; alternate. N6-succinyllysine; alternate is present on K319.

The protein belongs to the short-chain dehydrogenases/reductases (SDR) family. 2,4-dienoyl-CoA reductase subfamily. Homotetramer.

It localises to the mitochondrion. The enzyme catalyses a (2E,4E)-dienoyl-CoA + NADPH + H(+) = a 4,5-saturated-(3E)-enoyl-CoA + NADP(+). The catalysed reaction is a (2E,4Z)-dienoyl-CoA + NADPH + H(+) = a 4,5-saturated-(3E)-enoyl-CoA + NADP(+). It carries out the reaction (2E,4E)-hexadienoyl-CoA + NADPH + H(+) = (3E)-hexenoyl-CoA + NADP(+). Its function is as follows. Auxiliary enzyme of beta-oxidation. It participates in the metabolism of unsaturated fatty enoyl-CoA esters having double bonds in both even- and odd-numbered positions in mitochondria. Catalyzes the NADP-dependent reduction of 2,4-dienoyl-CoA to yield trans-3-enoyl-CoA. The protein is 2,4-dienoyl-CoA reductase [(3E)-enoyl-CoA-producing], mitochondrial (Decr1) of Mus musculus (Mouse).